We begin with the raw amino-acid sequence, 527 residues long: Arginine--tRNA ligase (527 aa).

The short motif at 108-118 (ANPTGPLHIGH) is the 'HIGH' region element.

Belongs to the class-I aminoacyl-tRNA synthetase family. As to quaternary structure, monomer.

Its subcellular location is the cytoplasm. The enzyme catalyses tRNA(Arg) + L-arginine + ATP = L-arginyl-tRNA(Arg) + AMP + diphosphate. The sequence is that of Arginine--tRNA ligase from Sulfurimonas denitrificans (strain ATCC 33889 / DSM 1251) (Thiomicrospira denitrificans (strain ATCC 33889 / DSM 1251)).